A 515-amino-acid polypeptide reads, in one-letter code: Protein disulfide-isomerase (515 aa).

Positions 1–20 are cleaved as a signal peptide; that stretch reads MRSFAPWLVSLLGASAVVAA. Thioredoxin domains are found at residues 21 to 132 and 339 to 470; these read ADTE…QSLP and VLDG…ENGK. Residues Cys-54, Cys-57, Cys-389, and Cys-392 each act as nucleophile in the active site. 2 disulfides stabilise this stretch: Cys-54–Cys-57 and Cys-389–Cys-392. The disordered stretch occupies residues 478–515; sequence VASEETQEGGDVTEAAPSATEAETPAATDDEKAEHDEL. The segment covering 490–504 has biased composition (low complexity); sequence TEAAPSATEAETPAA. Basic and acidic residues predominate over residues 506–515; that stretch reads DDEKAEHDEL. The Prevents secretion from ER motif lies at 512-515; sequence HDEL.

Belongs to the protein disulfide isomerase family.

It is found in the endoplasmic reticulum lumen. It catalyses the reaction Catalyzes the rearrangement of -S-S- bonds in proteins.. Its function is as follows. Participates in the folding of proteins containing disulfide bonds, may be involved in glycosylation, prolyl hydroxylation and triglyceride transfer. This is Protein disulfide-isomerase (pdiA) from Aspergillus niger.